The sequence spans 342 residues: GTPase Obg (342 aa).

In terms of domain architecture, Obg spans 1-159 (MKFLDEAKVY…HWLWLRLKLI (159 aa)). An OBG-type G domain is found at 160 to 327 (ADAGLVGLPN…ALRALMAAMD (168 aa)). Residues 166 to 173 (GLPNAGKS), 191 to 195 (FTTLH), 212 to 215 (DIPG), 279 to 282 (SKAD), and 308 to 310 (SAA) each bind GTP. 2 residues coordinate Mg(2+): S173 and T193.

Belongs to the TRAFAC class OBG-HflX-like GTPase superfamily. OBG GTPase family. As to quaternary structure, monomer. The cofactor is Mg(2+).

The protein resides in the cytoplasm. Its function is as follows. An essential GTPase which binds GTP, GDP and possibly (p)ppGpp with moderate affinity, with high nucleotide exchange rates and a fairly low GTP hydrolysis rate. Plays a role in control of the cell cycle, stress response, ribosome biogenesis and in those bacteria that undergo differentiation, in morphogenesis control. The protein is GTPase Obg of Methylobacterium nodulans (strain LMG 21967 / CNCM I-2342 / ORS 2060).